The sequence spans 240 residues: Biosynthetic peptidoglycan transglycosylase (240 aa).

The chain crosses the membrane as a helical span at residues 15–35 (WMVYLGAVVAIAWLATQAFYF).

Belongs to the glycosyltransferase 51 family.

The protein localises to the cell inner membrane. It carries out the reaction [GlcNAc-(1-&gt;4)-Mur2Ac(oyl-L-Ala-gamma-D-Glu-L-Lys-D-Ala-D-Ala)](n)-di-trans,octa-cis-undecaprenyl diphosphate + beta-D-GlcNAc-(1-&gt;4)-Mur2Ac(oyl-L-Ala-gamma-D-Glu-L-Lys-D-Ala-D-Ala)-di-trans,octa-cis-undecaprenyl diphosphate = [GlcNAc-(1-&gt;4)-Mur2Ac(oyl-L-Ala-gamma-D-Glu-L-Lys-D-Ala-D-Ala)](n+1)-di-trans,octa-cis-undecaprenyl diphosphate + di-trans,octa-cis-undecaprenyl diphosphate + H(+). The protein operates within cell wall biogenesis; peptidoglycan biosynthesis. Its function is as follows. Peptidoglycan polymerase that catalyzes glycan chain elongation from lipid-linked precursors. In Paraburkholderia phytofirmans (strain DSM 17436 / LMG 22146 / PsJN) (Burkholderia phytofirmans), this protein is Biosynthetic peptidoglycan transglycosylase.